Consider the following 398-residue polypeptide: Acetate kinase (398 aa).

A Mg(2+)-binding site is contributed by Asn10. Lys17 is a binding site for ATP. Arg91 is a substrate binding site. Asp148 serves as the catalytic Proton donor/acceptor. Residues 208–212 (HLGNG), 283–285 (DCR), and 331–335 (GIGEN) each bind ATP. A Mg(2+)-binding site is contributed by Glu385.

It belongs to the acetokinase family. As to quaternary structure, homodimer. Mg(2+) serves as cofactor. The cofactor is Mn(2+).

The protein resides in the cytoplasm. The catalysed reaction is acetate + ATP = acetyl phosphate + ADP. It functions in the pathway metabolic intermediate biosynthesis; acetyl-CoA biosynthesis; acetyl-CoA from acetate: step 1/2. Its function is as follows. Catalyzes the formation of acetyl phosphate from acetate and ATP. Can also catalyze the reverse reaction. The sequence is that of Acetate kinase from Shewanella loihica (strain ATCC BAA-1088 / PV-4).